A 283-amino-acid polypeptide reads, in one-letter code: CDP-abequose synthase (283 aa).

NAD(+) is bound by residues 7–13 (GGSGYIG), 48–49 (EF), Y129, and K133. The active-site Proton acceptor is the Y129.

The protein belongs to the NAD(P)-dependent epimerase/dehydratase family.

The catalysed reaction is CDP-alpha-D-abequose + NADP(+) = CDP-4-dehydro-3,6-dideoxy-alpha-D-glucose + NADPH + H(+). Its pathway is bacterial outer membrane biogenesis; LPS O-antigen biosynthesis. In terms of biological role, the CDP-abequose synthase is involved in lipopolysaccharides (LPS) synthesis containing abequose which are important antigens of the cell surface responsible for the serological O specificity. Derivatives of the 3,6-dideoxyhexose group have a particular highly immunogenic character. The sequence is that of CDP-abequose synthase (rfbJ) from Yersinia pseudotuberculosis.